The sequence spans 436 residues: Protein translocase subunit SecY (436 aa).

A run of 10 helical transmembrane segments spans residues 19 to 39 (ILFT…TVPG), 68 to 88 (FSVF…VQLL), 116 to 136 (YISL…FNAL), 151 to 171 (LFIG…GEQI), 179 to 199 (GVSM…VKGI), 216 to 236 (IIFV…TTYV), 269 to 289 (VIPV…LQFL), 313 to 333 (GIAM…FVQI), 372 to 392 (VGSL…DLFG), and 395 to 415 (DTVA…IEGM).

Belongs to the SecY/SEC61-alpha family. As to quaternary structure, component of the Sec protein translocase complex. Heterotrimer consisting of SecY, SecE and SecG subunits. The heterotrimers can form oligomers, although 1 heterotrimer is thought to be able to translocate proteins. Interacts with the ribosome. Interacts with SecDF, and other proteins may be involved. Interacts with SecA.

The protein localises to the cell membrane. In terms of biological role, the central subunit of the protein translocation channel SecYEG. Consists of two halves formed by TMs 1-5 and 6-10. These two domains form a lateral gate at the front which open onto the bilayer between TMs 2 and 7, and are clamped together by SecE at the back. The channel is closed by both a pore ring composed of hydrophobic SecY resides and a short helix (helix 2A) on the extracellular side of the membrane which forms a plug. The plug probably moves laterally to allow the channel to open. The ring and the pore may move independently. This chain is Protein translocase subunit SecY, found in Streptococcus gordonii (strain Challis / ATCC 35105 / BCRC 15272 / CH1 / DL1 / V288).